The sequence spans 528 residues: Galactokinase (528 aa).

Arginine 53, glutamate 59, histidine 60, and aspartate 62 together coordinate alpha-D-galactose. Glycine 165, glycine 167, serine 169, and serine 170 together coordinate ATP. The alpha-D-galactose site is built by asparagine 213 and aspartate 217. Aspartate 217 acts as the Proton acceptor in catalysis. Serine 264, asparagine 265, and lysine 266 together coordinate ATP. Tyrosine 274 contributes to the alpha-D-galactose binding site. Residue serine 381 is modified to Phosphoserine.

The protein belongs to the GHMP kinase family. GalK subfamily.

The catalysed reaction is alpha-D-galactose + ATP = alpha-D-galactose 1-phosphate + ADP + H(+). It participates in carbohydrate metabolism; galactose metabolism. Galactokinase is a key enzyme in the galactose metabolism where it catalyzes the conversion of alpha-D-galactose to galactose 1-phosphate. Can also induce the transcription of the yeast GAL genes in response to the organism being challenged with galactose as the sole source of carbon. It's striking amino acid sequence similarity to GAL3 might explain its GAL3-like induction activity. The chain is Galactokinase from Saccharomyces cerevisiae (strain ATCC 204508 / S288c) (Baker's yeast).